The primary structure comprises 146 residues: Endoribonuclease YbeY (146 aa).

3 residues coordinate Zn(2+): His-108, His-112, and His-118.

This sequence belongs to the endoribonuclease YbeY family. Zn(2+) is required as a cofactor.

The protein resides in the cytoplasm. Functionally, single strand-specific metallo-endoribonuclease involved in late-stage 70S ribosome quality control and in maturation of the 3' terminus of the 16S rRNA. This Aster yellows witches'-broom phytoplasma (strain AYWB) protein is Endoribonuclease YbeY.